A 358-amino-acid polypeptide reads, in one-letter code: MKRNLNESSARSTAGCLPVPLFNQKKRNRQPLTSNPLQNDPGVSTVSDSYGSPSFPTDWAWEAVNPEVAPLKKTVNTGQIPASASYPWRSQDSVSKSIQSNAERSQSAWGYRGNNRNTSLRTWDFRPQHKTVSPAANSEFSSCPVNLGAQQQKQFQTPEFPNLPGHKEAEVPRQTCLSKLPGSTMKGPDRASALQAFKPSFQQNPFKKTVLGDIPRENSLKEGTLHQLKEKDNSLRIISAVIESMKYWRAHVQKTVLLFEILAVLDSAVTSGPHYSKTFLMRDGKNILPCVFYEIDRELPRLIRGRVHRCVGHYDPDKNIFKCVSVRPASASEQKTFQAFVTIADAEMKYHTKVTNEM.

4 stretches are compositionally biased toward polar residues: residues 1–12 (MKRNLNESSARS), 30–51 (QPLT…DSYG), 81–121 (PASA…TSLR), and 150–159 (QQQKQFQTPE). Disordered stretches follow at residues 1–51 (MKRN…DSYG), 81–122 (PASA…SLRT), and 150–172 (QQQK…AEVP).

Component of a multiprotein complex with MEIOB and RPA2. Interacts with MEIOB. Interacts with the complex BRME1:HSF2BP:BRCA2. In terms of tissue distribution, specifically expressed in gonadal germ cells, when male and female germ cells progress through prophase of meiosis I.

The protein localises to the chromosome. Functionally, meiosis-specific protein required for homologous recombination in meiosis I. The chain is Spermatogenesis-associated protein 22 from Mus musculus (Mouse).